Reading from the N-terminus, the 94-residue chain is Acylphosphatase (94 aa).

Residues 7-94 (AVQARVYGRV…TAPGDFRIVA (88 aa)) form the Acylphosphatase-like domain. Catalysis depends on residues Arg-22 and Asn-40.

It belongs to the acylphosphatase family.

It carries out the reaction an acyl phosphate + H2O = a carboxylate + phosphate + H(+). The sequence is that of Acylphosphatase (acyP) from Mesorhizobium japonicum (strain LMG 29417 / CECT 9101 / MAFF 303099) (Mesorhizobium loti (strain MAFF 303099)).